The sequence spans 104 residues: MAEASIQIEVVYATVQRQVLMTVDVPAGSSVRQALALCGMDREFPELDLSHCPVGIFGKVVADPAARVLEAGERIEIYRPLLADPMEIRRLRAAKAREKRTLPG.

This sequence belongs to the UPF0125 (RnfH) family.

The protein is UPF0125 protein PSPTO_4512 of Pseudomonas syringae pv. tomato (strain ATCC BAA-871 / DC3000).